The chain runs to 4076 residues: E3 ubiquitin-protein ligase TOM1-like (4076 aa).

The segment covering Ser225 to Ala237 has biased composition (low complexity). 17 disordered regions span residues Ser225 to Ala256, Tyr288 to Pro360, Ile748 to Ser819, Leu921 to Ala970, Ser1083 to Thr1103, Met1571 to Glu1646, Pro1988 to Ile2041, Asn2067 to Lys2110, Glu2275 to Ser2295, Ser2356 to Tyr2551, Gly2581 to Pro2634, Ile2782 to His2817, Glu2858 to Asp2955, Glu3037 to Leu3066, Arg3105 to Thr3132, Lys3216 to Gly3241, and Glu3353 to Pro3444. The segment covering Lys238–Thr250 has biased composition (basic and acidic residues). Low complexity predominate over residues Thr311–Pro320. Polar residues predominate over residues Arg322–Glu343. Acidic residues predominate over residues Glu767–Asp778. Residues Val940 to Asp950 are compositionally biased toward basic and acidic residues. Positions Ala959–Pro969 are enriched in polar residues. Polar residues predominate over residues Pro1606–Ala1620. Residues Pro1621–Pro1632 show a composition bias toward low complexity. Residues Ala1633–Arg1642 show a composition bias toward polar residues. A compositionally biased stretch (basic and acidic residues) spans Val2021–Ile2041. A compositionally biased stretch (polar residues) spans Asn2086–Glu2096. The segment covering Ser2099–Lys2110 has biased composition (basic and acidic residues). 2 stretches are compositionally biased toward acidic residues: residues Asp2378–Pro2387 and Glu2405–Glu2450. Over residues Gln2460–Gly2469 the composition is skewed to low complexity. Composition is skewed to acidic residues over residues Glu2470–Asp2516 and Glu2523–Tyr2551. Residues Glu2587 to Ile2597 are compositionally biased toward basic and acidic residues. Over residues Asp2598–Phe2622 the composition is skewed to acidic residues. 2 stretches are compositionally biased toward basic and acidic residues: residues His2788–Gln2803 and Glu2858–Glu2912. A coiled-coil region spans residues Ala2851–Ala2929. Residues Ala2913–Ala2927 show a composition bias toward low complexity. The span at Glu3037–Gln3047 shows a compositional bias: basic and acidic residues. Residues His3108–Ser3117 are compositionally biased toward polar residues. A coiled-coil region spans residues Pro3341 to Ala3375. Basic and acidic residues predominate over residues Glu3353–Ala3372. Positions Ala3373 to Asp3414 are enriched in low complexity. Residues Gln3415–Ile3439 are compositionally biased toward basic and acidic residues. Positions Lys3740–Ala4076 constitute an HECT domain. Cys4043 acts as the Glycyl thioester intermediate in catalysis.

This sequence belongs to the UPL family. TOM1/PTR1 subfamily.

The protein localises to the nucleus. It carries out the reaction S-ubiquitinyl-[E2 ubiquitin-conjugating enzyme]-L-cysteine + [acceptor protein]-L-lysine = [E2 ubiquitin-conjugating enzyme]-L-cysteine + N(6)-ubiquitinyl-[acceptor protein]-L-lysine.. It functions in the pathway protein modification; protein ubiquitination. In terms of biological role, probable ubiquitin ligase protein, which may be involved in mRNA export. E3 ubiquitin ligase proteins mediate ubiquitination and subsequent proteasomal degradation of target proteins. Participates in mRNA export from the nucleus by regulating the transport of hnRNP proteins. The polypeptide is E3 ubiquitin-protein ligase TOM1-like (Neurospora crassa (strain ATCC 24698 / 74-OR23-1A / CBS 708.71 / DSM 1257 / FGSC 987)).